A 78-amino-acid polypeptide reads, in one-letter code: uncharacterized protein (78 aa).

The N-terminal stretch at Met1–Ala45 is a signal peptide.

The protein to E.coli YkfL.

This is an uncharacterized protein from Escherichia coli (strain K12).